The chain runs to 482 residues: tRNA sulfurtransferase (482 aa).

Positions 61-165 constitute a THUMP domain; it reads KETLEVLTQT…NDKLNQVIER (105 aa). Residues 183–184, K265, G287, and Q296 contribute to the ATP site; that span reads LI. Cysteines 344 and 456 form a disulfide. The 79-residue stretch at 404–482 folds into the Rhodanese domain; that stretch reads VAEHAVVLDI…GFHNVKVYRP (79 aa). The active-site Cysteine persulfide intermediate is C456.

Belongs to the ThiI family.

Its subcellular location is the cytoplasm. The catalysed reaction is [ThiI sulfur-carrier protein]-S-sulfanyl-L-cysteine + a uridine in tRNA + 2 reduced [2Fe-2S]-[ferredoxin] + ATP + H(+) = [ThiI sulfur-carrier protein]-L-cysteine + a 4-thiouridine in tRNA + 2 oxidized [2Fe-2S]-[ferredoxin] + AMP + diphosphate. The enzyme catalyses [ThiS sulfur-carrier protein]-C-terminal Gly-Gly-AMP + S-sulfanyl-L-cysteinyl-[cysteine desulfurase] + AH2 = [ThiS sulfur-carrier protein]-C-terminal-Gly-aminoethanethioate + L-cysteinyl-[cysteine desulfurase] + A + AMP + 2 H(+). It functions in the pathway cofactor biosynthesis; thiamine diphosphate biosynthesis. Catalyzes the ATP-dependent transfer of a sulfur to tRNA to produce 4-thiouridine in position 8 of tRNAs, which functions as a near-UV photosensor. Also catalyzes the transfer of sulfur to the sulfur carrier protein ThiS, forming ThiS-thiocarboxylate. This is a step in the synthesis of thiazole, in the thiamine biosynthesis pathway. The sulfur is donated as persulfide by IscS. This is tRNA sulfurtransferase from Vibrio atlanticus (strain LGP32) (Vibrio splendidus (strain Mel32)).